Here is a 562-residue protein sequence, read N- to C-terminus: Cytosolic Fe-S cluster assembly factor nar1 (562 aa).

C20 contacts [4Fe-4S] cluster. A disordered region spans residues 28–47 (PKNESSNSQNPYEVTTEDKV). The span at 29-40 (KNESSNSQNPYE) shows a compositional bias: polar residues. [4Fe-4S] cluster contacts are provided by C62, C65, C68, C214, and C269. The segment at 439 to 462 (ARVPAASAGGNRRQPISRNSASAG) is disordered. Over residues 452-462 (QPISRNSASAG) the composition is skewed to polar residues. [4Fe-4S] cluster contacts are provided by C475 and C479. 2 disordered regions span residues 492–513 (REASTSTQSVTAVENPSKPTPH) and 541–562 (HSPSPSLRGRLGSMKLSSIGLT). Over residues 494–505 (ASTSTQSVTAVE) the composition is skewed to polar residues.

This sequence belongs to the NARF family.

Its function is as follows. Component of the cytosolic Fe/S protein assembly machinery. Required for maturation of extramitochondrial Fe/S proteins. May play a role in the transfer of pre-assembled Fe/S clusters to target apoproteins. This is Cytosolic Fe-S cluster assembly factor nar1 (nar1) from Aspergillus flavus (strain ATCC 200026 / FGSC A1120 / IAM 13836 / NRRL 3357 / JCM 12722 / SRRC 167).